Reading from the N-terminus, the 519-residue chain is MMSEHDLADVVQIAVEDLSPDHPVVLENHVVTDEDEPALKRQRLEINCQDPSIKTICLRLDSIEAKLQALEATCKSLEEKLDLVTNKQHSPIQVPMVAGSPLGATQTCNKVRCVVPQTTVILNNDRQNAIVAKMEDPLSNRAPDSLENVISNAVPGRRQNTIVVKVPGQEDSHHEDGESGSEASDSVSSCGQAGSQSIGSNVTLITLNSEEDYPNGTWLGDENNPEMRVRCAIIPSDMLHISTNCRTAEKMALTLLDYLFHREVQAVSNLSGQGKHGKKQLDPLTIYGIRCHLFYKFGITESDWYRIKQSIDSKCRTAWRRKQRGQSLAVKSFSRRTPNSSSYCPSEPMMSTPPPASELPQPQPQPQALHYALANAQQVQIHQIGEDGQVQVGHLHIAQVPQGEQVQITQDSEGNLQIHHVGQDGQLLEATRIPCLLAPSVFKASSGQVLQGAQLIAVASSDPAAAGVDGSPLQGSDIQVQYVQLAPVSDHTAGAQTAEALQPTLQPEMQLEHGAIQIQ.

Ser-19, Ser-90, and Ser-100 each carry phosphoserine. The stretch at 53-90 (IKTICLRLDSIEAKLQALEATCKSLEEKLDLVTNKQHS) forms a coiled coil. Lys-133 is covalently cross-linked (Glycyl lysine isopeptide (Lys-Gly) (interchain with G-Cter in SUMO2)). The tract at residues 152–342 (NAVPGRRQNT…FSRRTPNSSS (191 aa)) is interaction with CUX1 and HDAC1. The segment covering 168-177 (GQEDSHHEDG) has biased composition (basic and acidic residues). The interval 168–196 (GQEDSHHEDGESGSEASDSVSSCGQAGSQ) is disordered. Over residues 180–189 (GSEASDSVSS) the composition is skewed to low complexity. A BEN domain is found at 226-322 (EMRVRCAIIP…SKCRTAWRRK (97 aa)). Lys-275 is subject to N6-acetyllysine. A disordered region spans residues 327–364 (SLAVKSFSRRTPNSSSYCPSEPMMSTPPPASELPQPQP). Polar residues predominate over residues 335 to 344 (RRTPNSSSYC). Phosphothreonine occurs at positions 337 and 352. Positions 342–393 (SYCPSEPMMSTPPPASELPQPQPQPQALHYALANAQQVQIHQIGEDGQVQVG) are DNA-binding. A compositionally biased stretch (pro residues) spans 351-364 (STPPPASELPQPQP).

The protein belongs to the BANP/SMAR1 family. Part of a corepressor complex containing BANP, HDAC1, SIN3A, SIN3B, RBL1 and RBL2. Forms a trimeric complex in the nucleus consisting of BANP, HDAC6 and KHDRBS1/SAM68; HDAC6 keeps KHDRBS1 in a deacetylated state which inhibits the inclusion of CD44 alternate exons. The complex is disrupted by MAPK1/MAPK3-mediated phosphorylation of BANP which results in BANP export to the cytoplasm. This facilitates acetylation of KHDRBS1 and CD44 variant exon inclusion. Interacts with TP53. Interacts with CUX1/CDP. Interacts with HDAC1. In terms of processing, MAPK1/MAPK3-mediated phosphorylation at Thr-337 and Thr-352 results in export to the cytoplasm. In terms of tissue distribution, down-regulated in breast cancer cell lines.

It localises to the nucleus. The protein resides in the nucleus speckle. Its subcellular location is the cytoplasm. Controls V(D)J recombination during T-cell development by repressing T-cell receptor (TCR) beta enhancer function. Binds to scaffold/matrix attachment region beta (S/MARbeta), an ATC-rich DNA sequence located upstream of the TCR beta enhancer. Represses cyclin D1 transcription by recruiting HDAC1 to its promoter, thereby diminishing H3K9ac, H3S10ph and H4K8ac levels. Promotes TP53 activation, which causes cell cycle arrest. Plays a role in the regulation of alternative splicing. Binds to CD44 pre-mRNA and negatively regulates the inclusion of CD44 proximal variable exons v2-v6 but has no effect on distal variable exons v7-v10. The chain is Protein BANP (BANP) from Homo sapiens (Human).